The sequence spans 154 residues: 3-hydroxyacyl-[acyl-carrier-protein] dehydratase FabZ (154 aa).

The active site involves H54.

This sequence belongs to the thioester dehydratase family. FabZ subfamily.

It is found in the cytoplasm. It carries out the reaction a (3R)-hydroxyacyl-[ACP] = a (2E)-enoyl-[ACP] + H2O. In terms of biological role, involved in unsaturated fatty acids biosynthesis. Catalyzes the dehydration of short chain beta-hydroxyacyl-ACPs and long chain saturated and unsaturated beta-hydroxyacyl-ACPs. The polypeptide is 3-hydroxyacyl-[acyl-carrier-protein] dehydratase FabZ (Shewanella baltica (strain OS223)).